A 121-amino-acid polypeptide reads, in one-letter code: Small ribosomal subunit protein uS13 (121 aa).

The disordered stretch occupies residues 90-121 (RHRRGLPVRGQHTKNNARTRKGKKVSIAGRKK).

The protein belongs to the universal ribosomal protein uS13 family. Part of the 30S ribosomal subunit. Forms a loose heterodimer with protein S19. Forms two bridges to the 50S subunit in the 70S ribosome.

Located at the top of the head of the 30S subunit, it contacts several helices of the 16S rRNA. In the 70S ribosome it contacts the 23S rRNA (bridge B1a) and protein L5 of the 50S subunit (bridge B1b), connecting the 2 subunits; these bridges are implicated in subunit movement. Contacts the tRNAs in the A and P-sites. The polypeptide is Small ribosomal subunit protein uS13 (Lactiplantibacillus plantarum (strain ATCC BAA-793 / NCIMB 8826 / WCFS1) (Lactobacillus plantarum)).